The primary structure comprises 1166 residues: DNA-directed RNA polymerase subunit beta (1166 aa).

It belongs to the RNA polymerase beta chain family. In terms of assembly, the RNAP catalytic core consists of 2 alpha, 1 beta, 1 beta' and 1 omega subunit. When a sigma factor is associated with the core the holoenzyme is formed, which can initiate transcription.

The catalysed reaction is RNA(n) + a ribonucleoside 5'-triphosphate = RNA(n+1) + diphosphate. In terms of biological role, DNA-dependent RNA polymerase catalyzes the transcription of DNA into RNA using the four ribonucleoside triphosphates as substrates. The sequence is that of DNA-directed RNA polymerase subunit beta from Nocardioides sp. (strain ATCC BAA-499 / JS614).